A 212-amino-acid polypeptide reads, in one-letter code: Protein-L-isoaspartate O-methyltransferase (212 aa).

Residue Ser60 is part of the active site.

It belongs to the methyltransferase superfamily. L-isoaspartyl/D-aspartyl protein methyltransferase family.

It is found in the cytoplasm. The catalysed reaction is [protein]-L-isoaspartate + S-adenosyl-L-methionine = [protein]-L-isoaspartate alpha-methyl ester + S-adenosyl-L-homocysteine. Its function is as follows. Catalyzes the methyl esterification of L-isoaspartyl residues in peptides and proteins that result from spontaneous decomposition of normal L-aspartyl and L-asparaginyl residues. It plays a role in the repair and/or degradation of damaged proteins. The sequence is that of Protein-L-isoaspartate O-methyltransferase from Methanococcus maripaludis (strain C6 / ATCC BAA-1332).